A 368-amino-acid polypeptide reads, in one-letter code: 4-hydroxy-3-methylbut-2-en-1-yl diphosphate synthase (flavodoxin) (368 aa).

Residues Cys271, Cys274, Cys306, and Glu313 each contribute to the [4Fe-4S] cluster site.

The protein belongs to the IspG family. The cofactor is [4Fe-4S] cluster.

The catalysed reaction is (2E)-4-hydroxy-3-methylbut-2-enyl diphosphate + oxidized [flavodoxin] + H2O + 2 H(+) = 2-C-methyl-D-erythritol 2,4-cyclic diphosphate + reduced [flavodoxin]. It participates in isoprenoid biosynthesis; isopentenyl diphosphate biosynthesis via DXP pathway; isopentenyl diphosphate from 1-deoxy-D-xylulose 5-phosphate: step 5/6. Converts 2C-methyl-D-erythritol 2,4-cyclodiphosphate (ME-2,4cPP) into 1-hydroxy-2-methyl-2-(E)-butenyl 4-diphosphate. In Buchnera aphidicola subsp. Acyrthosiphon pisum (strain APS) (Acyrthosiphon pisum symbiotic bacterium), this protein is 4-hydroxy-3-methylbut-2-en-1-yl diphosphate synthase (flavodoxin).